The primary structure comprises 344 residues: Cyclin-G2 (344 aa).

The interval C298–S324 is disordered. The segment covering S302–C313 has biased composition (acidic residues).

This sequence belongs to the cyclin family. Cyclin G subfamily. Highest levels in intestine. Intermediate levels in spleen, brain and kidney. Low levels in testis, stomach, pancreas, liver, salivary gland and muscle. According to PubMed:9139721 also abundant in thymus.

Its subcellular location is the cytoplasm. The protein resides in the nucleus. Functionally, may play a role in growth regulation and in negative regulation of cell cycle progression. This chain is Cyclin-G2 (Ccng2), found in Mus musculus (Mouse).